An 809-amino-acid chain; its full sequence is Glycerol-3-phosphate acyltransferase (809 aa).

Positions 306–311 match the HXXXXD motif motif; it reads HRSHMD.

The protein belongs to the GPAT/DAPAT family.

It is found in the cell inner membrane. The catalysed reaction is sn-glycerol 3-phosphate + an acyl-CoA = a 1-acyl-sn-glycero-3-phosphate + CoA. It participates in phospholipid metabolism; CDP-diacylglycerol biosynthesis; CDP-diacylglycerol from sn-glycerol 3-phosphate: step 1/3. This chain is Glycerol-3-phosphate acyltransferase, found in Vibrio vulnificus (strain CMCP6).